Here is a 241-residue protein sequence, read N- to C-terminus: Probable transcriptional regulatory protein Rmet_0785 (241 aa).

It belongs to the TACO1 family.

It is found in the cytoplasm. This is Probable transcriptional regulatory protein Rmet_0785 from Cupriavidus metallidurans (strain ATCC 43123 / DSM 2839 / NBRC 102507 / CH34) (Ralstonia metallidurans).